The sequence spans 315 residues: MLKNKILATTLSVSLLAPLANPLLENAKAANDTEDIGKGSDIEIIKRTEDKTSNKWGVTQNIQFDFVKDTKYNKDALILKMQGFISSRTTYYNYKKTNHVKAMRWPFQYNIGLKTNDKYVSLINYLPKNKIESTNVSQTLGYNIGGNFQSAPSLGGNGSFNYSKSISYTQQNYVSEVEQQNSKSVLWGVKANSFATESGQKSAFDSDLFVGYKPHSKDPRDYFVPDSELPPLVQSGFNPSFIATVSHEKGSSDTSEFEITYGRNMDVTHAIKRSTHYGNSYLDGHRVHNAFVNRNYTVKYEVNWKTHEIKVKGQN.

Residues 1–29 form the signal peptide; that stretch reads MLKNKILATTLSVSLLAPLANPLLENAKA.

This sequence belongs to the aerolysin family. As to quaternary structure, leukocidin consists of two protein components: F and S.

Functionally, leukocidin causes cytotoxic changes in polymorphonuclear leukocytes. The protein is Leukocidin-S subunit (lukS) of Staphylococcus aureus.